The following is a 467-amino-acid chain: MLSDELESKPELLVQFVQNTSIPLGQGLVESEAKDITCLSLLPVTEASECSRLMLPDDTPNHTNSSKEVPSSAVLRSLQVNVGPDGEETRAQTVQKSPEFLSTPESPSLLQDLQPSDSTSFILLNLTRAGLGSSAEHLVFVQDEADDSGNDFLSSESTDSSIPWFLRVQELAHDSLIAATRAQLAKNAKTSSNGENVHLGSGDGQPKDSGPLPQMEKKLKCTVEGCDRTFVWPAHFKYHLKTHRNDRSFICPAAGCGKSFYVLQRLKVHMRTHNGEKPFVCPESNCGKQFTTAGNLKNHLRIHTGEKPFLCEAQGCGRSFAEYSSLRKHLVVHSGEKPHQCQVCGKTFSQSGSRNVHMRKHHLQMGAAGSQEQEPAAEPLMGSSLLEEASVTSKNLVSMNSQPSLGGESLNLPNTNSILGVDDEVLAEGSPRPLSSVPDVTHHLVTMQSGRQSYELLNQGDLTERRT.

Disordered regions lie at residues 84-111 and 187-214; these read PDGE…SLLQ and NAKT…PLPQ. 5 consecutive C2H2-type zinc fingers follow at residues 219–243, 249–273, 279–303, 309–333, and 339–362; these read LKCT…LKTH, FICP…MRTH, FVCP…LRIH, FLCE…LVVH, and HQCQ…RKHH. Residues Cys-221, Cys-226, His-239, His-243, Cys-251, Cys-256, His-269, His-273, Cys-281, Cys-286, His-299, His-303, Cys-311, Cys-316, His-329, His-333, Cys-341, Cys-344, His-357, and His-361 each contribute to the Zn(2+) site.

As to quaternary structure, interacts with CDKN2A/p14ARF. O-glycosylated. O-GlcNAcylation may occur in response to increasing glucose levels and affect transcription factor activity. Post-translationally, sumoylated. Sumoylation increases its half-life, possibly by blocking ubiquitin-mediated degradation.

It localises to the nucleus. The protein resides in the chromosome. Its function is as follows. Transcription factor that binds to the sequence motif 5'-CATCCCATAATA-3', and is specifically required to silence expression of fetal hemoglobin in adult erythroid cells. Prevents expression of fetal hemoglobin genes HBG1 and HBG2 through CHD4: acts as a direct transcriptional activator of CHD4, a central component of the NuRD complex that represses transcription of fetal hemoglobin genes HBG1 and HBG2 in erythroid cells. May also activate transcription of matrix-remodeling genes such as MMP1 during fibroblast senescence. May activate transcription of the gap junction gene GJC1, perhaps in response to increasing glucose. However, recent studies suggest that ZNF410 is dedicated to regulate expression of a single gene: CHD4. This chain is Zinc finger protein 410, found in Bos taurus (Bovine).